Reading from the N-terminus, the 849-residue chain is MEDPVIRIPPYHYIHVLDLNSNVTRVEVGPHSFIRQDHERVVFSPKRMVMVPPRHYCVVLNPVARGPTGAVLFDGAGQAQLRHADLDIRLTQEPFPLYPGEELQQGVTPLQVVLADTALRLRALLDFEDEDGNKFVAGDEWLFEGPGTYIPHKEVEVVETLQATIIRHNQAIRLRARKECLDRQGTRRVTGEEWLVKRVGAYLPGVYEEVVDVVDAYVLTDKKALHLRATRTFEDVQGHVRRTGEEWLVTQEQSEAYVPDVFEEVVAEVLVTTLGPRQYCVVLDPVGPNGQPQLGQQRVVKGEKSFFLQPGERLQAGIQDVYVLSEDEGLLLQALQTIKDTDEDGTEVIRRAGDRWLARGPLEYVPPAEVTVLERRQALALAENEGIYVRDIRTGKVRVVTGQTYMLTESEELWEKELPPGVEVLLAEARGDTAGQDSGIQSSSGPSFGVQERDRTRAVTYQVPHNAAVQVYDYRERRARVVLGPELVVLGPGEQLTVLSLSGGRPKRPHARRSLCLRLGPDFCADIVTIETADHARLQLQLAYNWHFEVPEDPKALGRLFSVPDFVGDACKALASRVRGAVAAVTFDDFHKNSNRLICSAVFGFDEGGRLREHLRFVPNGLVVTSVDIQSVEPVDQRTRDALQRSVQLAIEIATNSQEAAARHEAERLAQEARVRLERQRLLDQAEAERARRELLELEALSAAVESAGAARAEAQARAEAARIEAEAAILQAKLKAEAVAIETEAELARLERMQAQEVRAQRARAEAEAARAQALAAVEASKVREVAAALGPETIRDIARAGPELQVKLLQGLGLQSALITDGAAPLNLFSTARGLLGLAVPPEPSTS.

MVP repeat units follow at residues E2–R54, H55–P109, L110–Q162, A163–D215, A216–L270, V271–V321, Y322–A378, L379–A458, and V459–P521.

As to quaternary structure, the vault ribonucleoprotein particle is a huge (400 A x 670 A) cage structure of 12.9 MDa. It consists of a dimer of half-vaults, with each half-vault comprising 39 identical major vault protein (MVP) chains, PARP4 and one or more vault RNAs (vRNAs).

The protein localises to the cytoplasm. It is found in the nucleus. Functionally, required for normal vault structure. Vaults are multi-subunit structures that may act as scaffolds for proteins involved in signal transduction. Vaults may also play a role in nucleo-cytoplasmic transport. This chain is Major vault protein (MVP), found in Gallus gallus (Chicken).